Here is an 86-residue protein sequence, read N- to C-terminus: Small ribosomal subunit protein bS16 (86 aa).

It belongs to the bacterial ribosomal protein bS16 family.

The chain is Small ribosomal subunit protein bS16 from Methylibium petroleiphilum (strain ATCC BAA-1232 / LMG 22953 / PM1).